We begin with the raw amino-acid sequence, 420 residues long: UDP-N-acetylglucosamine 1-carboxyvinyltransferase (420 aa).

Residue Lys22–Asn23 participates in phosphoenolpyruvate binding. Arg91 is a binding site for UDP-N-acetyl-alpha-D-glucosamine. Cys115 acts as the Proton donor in catalysis. 2-(S-cysteinyl)pyruvic acid O-phosphothioketal is present on Cys115. UDP-N-acetyl-alpha-D-glucosamine-binding positions include Arg120–Leu124, Lys160–Val163, Asp305, and Ile327.

It belongs to the EPSP synthase family. MurA subfamily.

It localises to the cytoplasm. It catalyses the reaction phosphoenolpyruvate + UDP-N-acetyl-alpha-D-glucosamine = UDP-N-acetyl-3-O-(1-carboxyvinyl)-alpha-D-glucosamine + phosphate. Its pathway is cell wall biogenesis; peptidoglycan biosynthesis. Its function is as follows. Cell wall formation. Adds enolpyruvyl to UDP-N-acetylglucosamine. The chain is UDP-N-acetylglucosamine 1-carboxyvinyltransferase from Proteus mirabilis (strain HI4320).